A 467-amino-acid polypeptide reads, in one-letter code: Membrane-bound lytic murein transglycosylase F (467 aa).

Positions 1 to 33 are cleaved as a signal peptide; the sequence is MTELFRHSKHLLASLALLSVLGLMLAMHPSPSA. The segment at 34–266 is non-LT domain; the sequence is IERIMARGEL…KLEDRFYGHV (233 aa). The tract at residues 268 to 467 is LT domain; it reads QFNLYAARSF…RRDDTLIALN (200 aa). The active site involves glutamate 313.

The protein in the N-terminal section; belongs to the bacterial solute-binding protein 3 family. It in the C-terminal section; belongs to the transglycosylase Slt family.

The protein localises to the cell outer membrane. It carries out the reaction Exolytic cleavage of the (1-&gt;4)-beta-glycosidic linkage between N-acetylmuramic acid (MurNAc) and N-acetylglucosamine (GlcNAc) residues in peptidoglycan, from either the reducing or the non-reducing ends of the peptidoglycan chains, with concomitant formation of a 1,6-anhydrobond in the MurNAc residue.. Functionally, murein-degrading enzyme that degrades murein glycan strands and insoluble, high-molecular weight murein sacculi, with the concomitant formation of a 1,6-anhydromuramoyl product. Lytic transglycosylases (LTs) play an integral role in the metabolism of the peptidoglycan (PG) sacculus. Their lytic action creates space within the PG sacculus to allow for its expansion as well as for the insertion of various structures such as secretion systems and flagella. The sequence is that of Membrane-bound lytic murein transglycosylase F from Alcanivorax borkumensis (strain ATCC 700651 / DSM 11573 / NCIMB 13689 / SK2).